An 817-amino-acid chain; its full sequence is CD177 antigen (817 aa).

Positions 1 to 21 are cleaved as a signal peptide; the sequence is MNSIPVLTLLGVTALLPCVPA. Residues 22 to 796 are Extracellular-facing; that stretch reads LTCQKSSAQA…PSLAWTLRLS (775 aa). Asn-115, Asn-189, Asn-379, and Asn-566 each carry an N-linked (GlcNAc...) asparagine glycan. UPAR/Ly6 domains follow at residues 134–203, 322–393, 511–581, and 705–774; these read CPLC…SENC, CRHC…REDC, CPLC…ERCS, and CPMC…AEES. A helical; Anchor for type IV membrane protein transmembrane segment spans residues 797 to 817; it reads AWMLGLSALLSSLYAGICPLC.

Found in a complex with integrin ITGAM/CD11b and ITGB2/CD18. Interacts with PECAM1 (via Ig-like C2-type domain 6); the interaction is Ca(2+)-dependent; the interaction is direct. Interacts with serine protease PRTN3/myeloblastin; the interaction tethers PRTN3 to the cell surface; the interaction is direct. In terms of tissue distribution, expressed in neutrophils.

It is found in the cell membrane. Functionally, in association with beta-2 integrin heterodimer ITGAM/CD11b and ITGB2/CD18, mediates activation of TNF-alpha primed neutrophils including degranulation and superoxide production. In addition, by preventing beta-2 integrin internalization and attenuating chemokine signaling favors adhesion over migration. Heterophilic interaction with PECAM1 on endothelial cells plays a role in neutrophil transendothelial migration in vitro. However, appears to be dispensable for neutrophil recruitment caused by bacterial infection in vivo. Acts as a receptor for the mature form of protease PRTN3 allowing its display at the cell surface of neutrophils. By displaying PRTN3 at the neutrophil cell surface, may play a role in enhancing endothelial cell junctional integrity and thus vascular integrity during neutrophil diapedesis. This chain is CD177 antigen (Cd177), found in Mus musculus (Mouse).